Reading from the N-terminus, the 468-residue chain is Peroxisome proliferator-activated receptor alpha (468 aa).

Positions 99–173 form a DNA-binding region, nuclear receptor; the sequence is NIECRICGDK…VGMSHNAIRF (75 aa). 2 NR C4-type zinc fingers span residues 102–122 and 139–161; these read CRIC…CEGC and CDRS…FHKC. The NR LBD domain maps to 239 to 466; it reads FVIHDMETLC…HPLLQEIYRD (228 aa). The interval 304 to 433 is required for heterodimerization with RXRA; it reads DQVTLLKYGV…PKLLQKMVDL (130 aa).

The protein belongs to the nuclear hormone receptor family. NR1 subfamily. In terms of assembly, heterodimer; with RXRA. This heterodimerization is required for DNA binding and transactivation activity. Interacts with NCOA3 coactivator. Interacts with CITED2; the interaction stimulates its transcriptional activity. Also interacts with PPARBP in vitro. Interacts with AKAP13, LPIN1, PRDM16 and coactivator NCOA6. Interacts with ASXL1 and ASXL2. Interacts with PER2. Interacts with SIRT1; the interaction seems to be modulated by NAD(+) levels. Interacts with CRY1 and CRY2. In hepatocytes, interacts with PAQR3 and HUWE1; the interactions promote PPARA poylubiquitination and HUWE1-mediated degradation. In terms of processing, ubiquitinated by E3 ubiquitin-protein ligase HUWE1; leading to proteasomal degradation. Phosphorylated. As to expression, highly expressed in liver, kidney and heart. Very weakly expressed in brain and testis.

Its subcellular location is the nucleus. Functionally, ligand-activated transcription factor. Key regulator of lipid metabolism. Activated by the endogenous ligand 1-palmitoyl-2-oleoyl-sn-glycerol-3-phosphocholine (16:0/18:1-GPC). Activated by oleylethanolamide, a naturally occurring lipid that regulates satiety. Receptor for peroxisome proliferators such as hypolipidemic drugs and fatty acids. Regulates the peroxisomal beta-oxidation pathway of fatty acids. Functions as a transcription activator for the ACOX1 and P450 genes. Transactivation activity requires heterodimerization with RXRA and is antagonized by NR2C2. May be required for the propagation of clock information to metabolic pathways regulated by PER2. The chain is Peroxisome proliferator-activated receptor alpha (Ppara) from Mus musculus (Mouse).